Reading from the N-terminus, the 210-residue chain is Thiamine-phosphate synthase (210 aa).

Residues 34 to 38 and Asn66 contribute to the 4-amino-2-methyl-5-(diphosphooxymethyl)pyrimidine site; that span reads QLRHK. 2 residues coordinate Mg(2+): Asp67 and Asp86. Ser105 contributes to the 4-amino-2-methyl-5-(diphosphooxymethyl)pyrimidine binding site. 131–133 provides a ligand contact to 2-[(2R,5Z)-2-carboxy-4-methylthiazol-5(2H)-ylidene]ethyl phosphate; sequence TSS. Residue Lys134 coordinates 4-amino-2-methyl-5-(diphosphooxymethyl)pyrimidine. Gly162 is a 2-[(2R,5Z)-2-carboxy-4-methylthiazol-5(2H)-ylidene]ethyl phosphate binding site.

This sequence belongs to the thiamine-phosphate synthase family. The cofactor is Mg(2+).

The catalysed reaction is 2-[(2R,5Z)-2-carboxy-4-methylthiazol-5(2H)-ylidene]ethyl phosphate + 4-amino-2-methyl-5-(diphosphooxymethyl)pyrimidine + 2 H(+) = thiamine phosphate + CO2 + diphosphate. It carries out the reaction 2-(2-carboxy-4-methylthiazol-5-yl)ethyl phosphate + 4-amino-2-methyl-5-(diphosphooxymethyl)pyrimidine + 2 H(+) = thiamine phosphate + CO2 + diphosphate. The enzyme catalyses 4-methyl-5-(2-phosphooxyethyl)-thiazole + 4-amino-2-methyl-5-(diphosphooxymethyl)pyrimidine + H(+) = thiamine phosphate + diphosphate. The protein operates within cofactor biosynthesis; thiamine diphosphate biosynthesis; thiamine phosphate from 4-amino-2-methyl-5-diphosphomethylpyrimidine and 4-methyl-5-(2-phosphoethyl)-thiazole: step 1/1. Its function is as follows. Condenses 4-methyl-5-(beta-hydroxyethyl)thiazole monophosphate (THZ-P) and 2-methyl-4-amino-5-hydroxymethyl pyrimidine pyrophosphate (HMP-PP) to form thiamine monophosphate (TMP). The polypeptide is Thiamine-phosphate synthase (Chlorobium limicola (strain DSM 245 / NBRC 103803 / 6330)).